We begin with the raw amino-acid sequence, 314 residues long: DNA-directed RNA polymerase subunit alpha (314 aa).

The segment at 1-228 is alpha N-terminal domain (alpha-NTD); sequence MIEIEKPRIE…EHLNIFVSLT (228 aa). Residues 245–314 form an alpha C-terminal domain (alpha-CTD) region; that stretch reads KEKVLEMSIE…DLGLGLRKED (70 aa).

The protein belongs to the RNA polymerase alpha chain family. In terms of assembly, homodimer. The RNAP catalytic core consists of 2 alpha, 1 beta, 1 beta' and 1 omega subunit. When a sigma factor is associated with the core the holoenzyme is formed, which can initiate transcription.

The catalysed reaction is RNA(n) + a ribonucleoside 5'-triphosphate = RNA(n+1) + diphosphate. In terms of biological role, DNA-dependent RNA polymerase catalyzes the transcription of DNA into RNA using the four ribonucleoside triphosphates as substrates. In Staphylococcus epidermidis (strain ATCC 35984 / DSM 28319 / BCRC 17069 / CCUG 31568 / BM 3577 / RP62A), this protein is DNA-directed RNA polymerase subunit alpha.